Here is a 105-residue protein sequence, read N- to C-terminus: Thiosulfate sulfurtransferase GlpE (105 aa).

The Rhodanese domain maps to 15 to 103; it reads MQQGAILVDI…WCRAELPIDT (89 aa). Cysteine 63 functions as the Cysteine persulfide intermediate in the catalytic mechanism.

The protein belongs to the GlpE family.

It is found in the cytoplasm. The catalysed reaction is thiosulfate + hydrogen cyanide = thiocyanate + sulfite + 2 H(+). It carries out the reaction thiosulfate + [thioredoxin]-dithiol = [thioredoxin]-disulfide + hydrogen sulfide + sulfite + 2 H(+). Functionally, transferase that catalyzes the transfer of sulfur from thiosulfate to thiophilic acceptors such as cyanide or dithiols. May function in a CysM-independent thiosulfate assimilation pathway by catalyzing the conversion of thiosulfate to sulfite, which can then be used for L-cysteine biosynthesis. The sequence is that of Thiosulfate sulfurtransferase GlpE from Haemophilus influenzae (strain 86-028NP).